Here is a 188-residue protein sequence, read N- to C-terminus: Ribosome maturation factor RimM (188 aa).

Residues 98 to 171 enclose the PRC barrel domain; it reads EGEFFQGDLV…RIVIHPPEYV (74 aa).

Belongs to the RimM family. As to quaternary structure, binds ribosomal protein uS19.

The protein resides in the cytoplasm. Functionally, an accessory protein needed during the final step in the assembly of 30S ribosomal subunit, possibly for assembly of the head region. Essential for efficient processing of 16S rRNA. May be needed both before and after RbfA during the maturation of 16S rRNA. It has affinity for free ribosomal 30S subunits but not for 70S ribosomes. The polypeptide is Ribosome maturation factor RimM (Myxococcus xanthus (strain DK1622)).